The chain runs to 659 residues: Acetyl-coenzyme A synthetase (659 aa).

Residues 206–209 (RRGK) and threonine 324 contribute to the CoA site. ATP is bound by residues 400–402 (GEP), 424–429 (DTWWQT), aspartate 516, arginine 531, and arginine 542. Mg(2+)-binding residues include valine 553 and histidine 555. Arginine 600 lines the CoA pocket.

This sequence belongs to the ATP-dependent AMP-binding enzyme family. Mg(2+) serves as cofactor.

The enzyme catalyses acetate + ATP + CoA = acetyl-CoA + AMP + diphosphate. Functionally, catalyzes the conversion of acetate into acetyl-CoA (AcCoA), an essential intermediate at the junction of anabolic and catabolic pathways. AcsA undergoes a two-step reaction. In the first half reaction, AcsA combines acetate with ATP to form acetyl-adenylate (AcAMP) intermediate. In the second half reaction, it can then transfer the acetyl group from AcAMP to the sulfhydryl group of CoA, forming the product AcCoA. This Methanothrix thermoacetophila (strain DSM 6194 / JCM 14653 / NBRC 101360 / PT) (Methanosaeta thermophila) protein is Acetyl-coenzyme A synthetase (acsA).